A 176-amino-acid polypeptide reads, in one-letter code: Translation initiation factor IF-3 (176 aa).

Belongs to the IF-3 family. In terms of assembly, monomer.

It is found in the cytoplasm. IF-3 binds to the 30S ribosomal subunit and shifts the equilibrium between 70S ribosomes and their 50S and 30S subunits in favor of the free subunits, thus enhancing the availability of 30S subunits on which protein synthesis initiation begins. In Wolinella succinogenes (strain ATCC 29543 / DSM 1740 / CCUG 13145 / JCM 31913 / LMG 7466 / NCTC 11488 / FDC 602W) (Vibrio succinogenes), this protein is Translation initiation factor IF-3.